The following is a 187-amino-acid chain: UPF0301 protein LPC_2717 (187 aa).

Belongs to the UPF0301 (AlgH) family.

In Legionella pneumophila (strain Corby), this protein is UPF0301 protein LPC_2717.